Here is a 353-residue protein sequence, read N- to C-terminus: N6-methyladenosine RNA demethylase ALKB1 (353 aa).

One can recognise a Fe2OG dioxygenase domain in the interval 223–352 (IAQAAIVNFY…RINLNVRQMR (130 aa)). H241, D243, and H308 together coordinate Fe cation. R343 is a binding site for 2-oxoglutarate.

Belongs to the alkB family. Fe(2+) is required as a cofactor.

Its subcellular location is the cytoplasm. It localises to the P-body. The catalysed reaction is an N(6)-methyladenosine in mRNA + 2-oxoglutarate + O2 = an adenosine in mRNA + formaldehyde + succinate + CO2. Functionally, RNA demethylase that regulates the stability of mRNAs through an m(6)A-dependent manner. M6A is a modification present at internal sites of mRNAs and some non-coding RNAs and plays a role in mRNA stability and processing. Plays a role in pathogenicity towards plant host. This chain is N6-methyladenosine RNA demethylase ALKB1, found in Pyricularia oryzae (strain 70-15 / ATCC MYA-4617 / FGSC 8958) (Rice blast fungus).